A 308-amino-acid polypeptide reads, in one-letter code: Ornithine carbamoyltransferase (308 aa).

Carbamoyl phosphate-binding positions include 50 to 53, Gln77, Arg101, and 128 to 131; these read STRT and HPCQ. L-ornithine-binding positions include Asn160, Asp224, and 228–229; that span reads SM. Carbamoyl phosphate is bound by residues 264–265 and Arg292; that span reads CL.

It belongs to the aspartate/ornithine carbamoyltransferase superfamily. OTCase family.

It is found in the cytoplasm. The catalysed reaction is carbamoyl phosphate + L-ornithine = L-citrulline + phosphate + H(+). The protein operates within amino-acid biosynthesis; L-arginine biosynthesis; L-arginine from L-ornithine and carbamoyl phosphate: step 1/3. In terms of biological role, reversibly catalyzes the transfer of the carbamoyl group from carbamoyl phosphate (CP) to the N(epsilon) atom of ornithine (ORN) to produce L-citrulline. The sequence is that of Ornithine carbamoyltransferase from Mycobacterium ulcerans (strain Agy99).